A 382-amino-acid polypeptide reads, in one-letter code: MKALHFGAGNIGRGFIGKLLADAGIQLTFADVNQVVLDALNARHSYQVHVVGENEQVDTVSGVNAVSSIGDDVVDLIAHVDLITTAVGPVVLERIAPAIAKGLVKRKAQGVDAPLNIIACENMVRGTTQLKGHVMNALPEDAKAWVEEHVGFVDSAVDRIVPPSASATNDPLEVTVETFSEWIVDKTQFKGALPNIPGMELTDNLMAFVERKLFTLNTGHAITAYLGKLAGHQTIRDAILDESIRAVVKGAMEESGAVLIKRYGFDADKHAAYIQKILGRFENPYLKDDVERVGRQPLRKLSAGDRLIKPLLGTLEYGLPHVNLVKGIAAAMHFRSDEDPQAQELAALITEKGPQAALAQISGLDANSDVVAEAVNAYNATK.

An NAD(+)-binding site is contributed by 3 to 14 (ALHFGAGNIGRG).

It belongs to the mannitol dehydrogenase family.

The enzyme catalyses D-mannitol 1-phosphate + NAD(+) = beta-D-fructose 6-phosphate + NADH + H(+). The chain is Mannitol-1-phosphate 5-dehydrogenase from Salmonella paratyphi A (strain ATCC 9150 / SARB42).